We begin with the raw amino-acid sequence, 564 residues long: Nucleolus and neural progenitor protein (564 aa).

Residues 431 to 495 (GSRTSTSEHP…KRRCSGTVQR (65 aa)) are disordered. The segment covering 442–459 (RQRRSKYKVLSRQRKPQR) has biased composition (basic residues). Residues 442-460 (RQRRSKYKVLSRQRKPQRK) form a nuclear localization signal region. The segment covering 460 to 473 (KLQSTLLKETQQVP) has biased composition (polar residues).

It belongs to the nepro family.

The protein localises to the nucleus. Its subcellular location is the nucleolus. Its function is as follows. May play a role in cortex development as part of the Notch signaling pathway. Downstream of Notch may repress the expression of proneural genes and inhibit neuronal differentiation thereby maintaining neural progenitors. May also play a role in preimplentation embryo development. This chain is Nucleolus and neural progenitor protein, found in Mus musculus (Mouse).